We begin with the raw amino-acid sequence, 411 residues long: MDPNESHHHHQQQQLHHLHQQQQQQQQQQRLTSPYFHHQLQHHHHLPTTVATTASTGNAVPSSNNGLFPPQPQPQHQPNDGSSSLAVYPHSVPSSAVTAPMEPVKRKRGRPRKYVTPEQALAAKKLASSASSSSAKQRRELAAVTGGTVSTNSGSSKKSQLGSVGKTGQCFTPHIVNIAPGEDVVQKIMMFANQSKHELCVLSASGTISNASLRQPAPSGGNLPYEGQYEILSLSGSYIRTEQGGKSGGLSVSLSASDGQIIGGAIGSHLTAAGPVQVILGTFQLDRKKDAAGSGGKGDASNSGSRLTSPVSSGQLLGMGFPPGMESTGRNPMRGNDEQHDHHHHQAGLGGPHHFMMQAPQGIHMTHSRPSEWRGGGNSGHDGRGGGGYDLSGRIGHESSENGDYEQQIPD.

4 disordered regions span residues 1 to 32 (MDPNESHHHHQQQQLHHLHQQQQQQQQQQRLT), 54 to 164 (ASTG…LGSV), 289 to 348 (KDAA…HQAG), and 366 to 411 (THSR…QIPD). Over residues 7-19 (HHHHQQQQLHHLH) the composition is skewed to basic residues. Low complexity predominate over residues 20–29 (QQQQQQQQQQ). The segment covering 54–66 (ASTGNAVPSSNNG) has biased composition (polar residues). Residues 105–113 (KRKRGRPRK) carry the Bipartite nuclear localization signal motif. A DNA-binding region (a.T hook) is located at residues 105 to 117 (KRKRGRPRKYVTP). 2 stretches are compositionally biased toward low complexity: residues 120 to 135 (ALAAKKLASSASSSSA) and 144 to 159 (VTGGTVSTNSGSSKKS). Residues 165–305 (GKTGQCFTPH…GKGDASNSGS (141 aa)) enclose the PPC domain. Residues 306–315 (RLTSPVSSGQ) show a composition bias toward polar residues. Gly residues predominate over residues 374 to 390 (RGGGNSGHDGRGGGGYD).

Its subcellular location is the nucleus. Transcription factor that specifically binds AT-rich DNA sequences related to the nuclear matrix attachment regions (MARs). The chain is AT-hook motif nuclear-localized protein 14 from Arabidopsis thaliana (Mouse-ear cress).